A 208-amino-acid chain; its full sequence is Putative ADP-ribose pyrophosphatase YjhB (208 aa).

The region spanning 69-195 is the Nudix hydrolase domain; the sequence is TPKADVRGAV…NTPSQLSMLF (127 aa). Positions 100–121 match the Nudix box motif; the sequence is GFCEIGLSPAENVVKEIKEESG. Mg(2+) is bound by residues glutamate 115 and glutamate 119.

The protein belongs to the Nudix hydrolase family. The cofactor is Mg(2+). Mn(2+) serves as cofactor.

Its function is as follows. Probably mediates the hydrolysis of some nucleoside diphosphate derivatives. This Bacillus subtilis (strain 168) protein is Putative ADP-ribose pyrophosphatase YjhB (yjhB).